The primary structure comprises 153 residues: Pheromone-binding protein Gp-9 (153 aa).

A signal peptide spans 1-19 (MKTFVLHIFIFALVAFASA). 3 disulfide bridges follow: Cys37/Cys77, Cys73/Cys129, and Cys118/Cys138.

This sequence belongs to the PBP/GOBP family. As to quaternary structure, homodimer.

Its subcellular location is the secreted. Its function is as follows. Colony queen number, a major feature of social organization, is associated with worker genotype for Gp-9. Colonies are headed by either a single reproductive queen (monogyne form) or multiple queens (polygyne form). Differences in worker Gp-9 genotypes between social forms may cause differences in workers' abilities to recognize queens and regulate their numbers. In Solenopsis electra (Fire ant), this protein is Pheromone-binding protein Gp-9.